The following is a 117-amino-acid chain: Large ribosomal subunit protein uL18 (117 aa).

The protein belongs to the universal ribosomal protein uL18 family. As to quaternary structure, part of the 50S ribosomal subunit; part of the 5S rRNA/L5/L18/L25 subcomplex. Contacts the 5S and 23S rRNAs.

Its function is as follows. This is one of the proteins that bind and probably mediate the attachment of the 5S RNA into the large ribosomal subunit, where it forms part of the central protuberance. This Vibrio atlanticus (strain LGP32) (Vibrio splendidus (strain Mel32)) protein is Large ribosomal subunit protein uL18.